The following is a 535-amino-acid chain: Light-independent protochlorophyllide reductase subunit B (535 aa).

A [4Fe-4S] cluster-binding site is contributed by Asp-36. Catalysis depends on Asp-292, which acts as the Proton donor. Residue 428-429 (GL) coordinates substrate. The disordered stretch occupies residues 446–483 (DEASPSESAPHASNGHEDVAGGSTAQSVPSHAATEGDG).

It belongs to the ChlB/BchB/BchZ family. Protochlorophyllide reductase is composed of three subunits; BchL, BchN and BchB. Forms a heterotetramer of two BchB and two BchN subunits. Requires [4Fe-4S] cluster as cofactor.

It carries out the reaction chlorophyllide a + oxidized 2[4Fe-4S]-[ferredoxin] + 2 ADP + 2 phosphate = protochlorophyllide a + reduced 2[4Fe-4S]-[ferredoxin] + 2 ATP + 2 H2O. It functions in the pathway porphyrin-containing compound metabolism; bacteriochlorophyll biosynthesis (light-independent). Functionally, component of the dark-operative protochlorophyllide reductase (DPOR) that uses Mg-ATP and reduced ferredoxin to reduce ring D of protochlorophyllide (Pchlide) to form chlorophyllide a (Chlide). This reaction is light-independent. The NB-protein (BchN-BchB) is the catalytic component of the complex. The chain is Light-independent protochlorophyllide reductase subunit B from Chlorobium limicola (strain DSM 245 / NBRC 103803 / 6330).